The primary structure comprises 635 residues: Extracellular metalloproteinase MEP (635 aa).

The signal sequence occupies residues 1 to 19 (MRAFLLASLASLPAVNVYA). Residues 20-244 (HPTHNSRGLT…VHAVVDYAAE (225 aa)) constitute a propeptide that is removed on maturation. Asparagine 287, asparagine 302, and asparagine 336 each carry an N-linked (GlcNAc...) asparagine glycan. Histidine 429 serves as a coordination point for Zn(2+). Glutamate 430 is a catalytic residue. Residue histidine 433 participates in Zn(2+) binding.

The protein belongs to the peptidase M36 family. Zn(2+) is required as a cofactor.

It localises to the secreted. Secreted metalloproteinase that allows assimilation of proteinaceous substrates. The protein is Extracellular metalloproteinase MEP (MEP) of Leptosphaeria maculans (strain JN3 / isolate v23.1.3 / race Av1-4-5-6-7-8) (Blackleg fungus).